The primary structure comprises 693 residues: Elongation factor G (693 aa).

The tr-type G domain maps to 8 to 282 (EKTRNIGIMA…AVIDYLPSPL (275 aa)). GTP is bound by residues 17–24 (AHIDAGKT), 81–85 (DTPGH), and 135–138 (NKMD).

The protein belongs to the TRAFAC class translation factor GTPase superfamily. Classic translation factor GTPase family. EF-G/EF-2 subfamily.

It is found in the cytoplasm. Catalyzes the GTP-dependent ribosomal translocation step during translation elongation. During this step, the ribosome changes from the pre-translocational (PRE) to the post-translocational (POST) state as the newly formed A-site-bound peptidyl-tRNA and P-site-bound deacylated tRNA move to the P and E sites, respectively. Catalyzes the coordinated movement of the two tRNA molecules, the mRNA and conformational changes in the ribosome. In Staphylococcus aureus (strain Mu3 / ATCC 700698), this protein is Elongation factor G.